The chain runs to 184 residues: uncharacterized protein (184 aa).

Residues Asp-130–Asn-149 form a disordered region.

The protein localises to the virion. This is an uncharacterized protein from Acanthamoeba polyphaga (Amoeba).